A 130-amino-acid chain; its full sequence is Small ribosomal subunit protein uS9 (130 aa).

Belongs to the universal ribosomal protein uS9 family.

The protein is Small ribosomal subunit protein uS9 of Methylococcus capsulatus (strain ATCC 33009 / NCIMB 11132 / Bath).